A 359-amino-acid chain; its full sequence is Histidinol-phosphate aminotransferase (359 aa).

Position 217 is an N6-(pyridoxal phosphate)lysine (Lys217).

The protein belongs to the class-II pyridoxal-phosphate-dependent aminotransferase family. Histidinol-phosphate aminotransferase subfamily. In terms of assembly, homodimer. Pyridoxal 5'-phosphate is required as a cofactor.

It catalyses the reaction L-histidinol phosphate + 2-oxoglutarate = 3-(imidazol-4-yl)-2-oxopropyl phosphate + L-glutamate. It functions in the pathway amino-acid biosynthesis; L-histidine biosynthesis; L-histidine from 5-phospho-alpha-D-ribose 1-diphosphate: step 7/9. The chain is Histidinol-phosphate aminotransferase from Salmonella choleraesuis (strain SC-B67).